The following is a 244-amino-acid chain: Probable transcriptional regulatory protein BT0025 (244 aa).

It belongs to the TACO1 family.

It is found in the cytoplasm. This chain is Probable transcriptional regulatory protein BT0025, found in Borrelia turicatae (strain 91E135).